The following is a 75-amino-acid chain: Cytochrome c oxidase subunit 6C (75 aa).

Over 1–13 (MASEVLAKPQMRG) the chain is Mitochondrial matrix. A helical membrane pass occupies residues 14 to 54 (LLARRLRIHMVGAFLISLGVAALYKFGVAEPRKKAYADFYK). The Mitochondrial intermembrane portion of the chain corresponds to 55 to 75 (NYSPEKDFEEMKKAGVFRSIK).

The protein belongs to the cytochrome c oxidase subunit 6c family. In terms of assembly, component of the cytochrome c oxidase (complex IV, CIV), a multisubunit enzyme composed of 14 subunits. The complex is composed of a catalytic core of 3 subunits MT-CO1, MT-CO2 and MT-CO3, encoded in the mitochondrial DNA, and 11 supernumerary subunits COX4I, COX5A, COX5B, COX6A, COX6B, COX6C, COX7A, COX7B, COX7C, COX8 and NDUFA4, which are encoded in the nuclear genome. The complex exists as a monomer or a dimer and forms supercomplexes (SCs) in the inner mitochondrial membrane with NADH-ubiquinone oxidoreductase (complex I, CI) and ubiquinol-cytochrome c oxidoreductase (cytochrome b-c1 complex, complex III, CIII), resulting in different assemblies (supercomplex SCI(1)III(2)IV(1) and megacomplex MCI(2)III(2)IV(2)).

The protein resides in the mitochondrion inner membrane. The protein operates within energy metabolism; oxidative phosphorylation. Component of the cytochrome c oxidase, the last enzyme in the mitochondrial electron transport chain which drives oxidative phosphorylation. The respiratory chain contains 3 multisubunit complexes succinate dehydrogenase (complex II, CII), ubiquinol-cytochrome c oxidoreductase (cytochrome b-c1 complex, complex III, CIII) and cytochrome c oxidase (complex IV, CIV), that cooperate to transfer electrons derived from NADH and succinate to molecular oxygen, creating an electrochemical gradient over the inner membrane that drives transmembrane transport and the ATP synthase. Cytochrome c oxidase is the component of the respiratory chain that catalyzes the reduction of oxygen to water. Electrons originating from reduced cytochrome c in the intermembrane space (IMS) are transferred via the dinuclear copper A center (CU(A)) of subunit 2 and heme A of subunit 1 to the active site in subunit 1, a binuclear center (BNC) formed by heme A3 and copper B (CU(B)). The BNC reduces molecular oxygen to 2 water molecules using 4 electrons from cytochrome c in the IMS and 4 protons from the mitochondrial matrix. This is Cytochrome c oxidase subunit 6C (COX6C) from Saimiri sciureus (Common squirrel monkey).